A 239-amino-acid polypeptide reads, in one-letter code: Ribonuclease 3 (239 aa).

One can recognise an RNase III domain in the interval 12–137; sequence RAKLEALIGH…LIAAIYLDGG (126 aa). Glu-50 contributes to the Mg(2+) binding site. The active site involves Asp-54. Positions 123 and 126 each coordinate Mg(2+). Glu-126 is a catalytic residue. Residues 162–231 enclose the DRBM domain; that stretch reads DAKTELQEWS…ATKMLEREGI (70 aa).

The protein belongs to the ribonuclease III family. In terms of assembly, homodimer. Mg(2+) serves as cofactor.

The protein resides in the cytoplasm. The enzyme catalyses Endonucleolytic cleavage to 5'-phosphomonoester.. Its function is as follows. Digests double-stranded RNA. Involved in the processing of primary rRNA transcript to yield the immediate precursors to the large and small rRNAs (23S and 16S). Processes some mRNAs, and tRNAs when they are encoded in the rRNA operon. Processes pre-crRNA and tracrRNA of type II CRISPR loci if present in the organism. The polypeptide is Ribonuclease 3 (Rhizobium etli (strain ATCC 51251 / DSM 11541 / JCM 21823 / NBRC 15573 / CFN 42)).